The following is a 593-amino-acid chain: Ribonuclease Y (593 aa).

A helical transmembrane segment spans residues 6–26 (ILLMYLIVGLLTALTVLIFVF). The KH domain maps to 218–278 (DPIKVKKVTD…IKLEVAYNAL (61 aa)). The HD domain maps to 354-464 (VLTHSIEAAQ…TKIADFLSAA (111 aa)).

It belongs to the RNase Y family.

Its subcellular location is the cell membrane. In terms of biological role, endoribonuclease that initiates mRNA decay. This chain is Ribonuclease Y, found in Mycoplasmoides gallisepticum (strain R(low / passage 15 / clone 2)) (Mycoplasma gallisepticum).